We begin with the raw amino-acid sequence, 249 residues long: Vitamin B12 import ATP-binding protein BtuD (249 aa).

One can recognise an ABC transporter domain in the interval 1 to 233 (MSIVMQLQDV…PNLAQAYGMN (233 aa)). Position 33–40 (33–40 (GPNGAGKS)) interacts with ATP.

The protein belongs to the ABC transporter superfamily. Vitamin B12 importer (TC 3.A.1.13.1) family. In terms of assembly, the complex is composed of two ATP-binding proteins (BtuD), two transmembrane proteins (BtuC) and a solute-binding protein (BtuF).

The protein resides in the cell inner membrane. The enzyme catalyses an R-cob(III)alamin(out) + ATP + H2O = an R-cob(III)alamin(in) + ADP + phosphate + H(+). Part of the ABC transporter complex BtuCDF involved in vitamin B12 import. Responsible for energy coupling to the transport system. The polypeptide is Vitamin B12 import ATP-binding protein BtuD (Escherichia coli (strain K12 / DH10B)).